The primary structure comprises 259 residues: UPF0246 protein PSPPH_1119 (259 aa).

This sequence belongs to the UPF0246 family.

This Pseudomonas savastanoi pv. phaseolicola (strain 1448A / Race 6) (Pseudomonas syringae pv. phaseolicola (strain 1448A / Race 6)) protein is UPF0246 protein PSPPH_1119.